Here is a 379-residue protein sequence, read N- to C-terminus: Dual-specificity RNA methyltransferase RlmN (379 aa).

The Proton acceptor role is filled by E95. In terms of domain architecture, Radical SAM core spans 101 to 345 (EETRGTLCVS…TTVRKTRGDD (245 aa)). C108 and C350 are oxidised to a cystine. [4Fe-4S] cluster is bound by residues C115, C119, and C122. S-adenosyl-L-methionine is bound by residues 176 to 177 (GE), S208, 230 to 232 (SLH), and N307. Residue C350 is the S-methylcysteine intermediate of the active site.

The protein belongs to the radical SAM superfamily. RlmN family. Requires [4Fe-4S] cluster as cofactor.

It localises to the cytoplasm. The enzyme catalyses adenosine(2503) in 23S rRNA + 2 reduced [2Fe-2S]-[ferredoxin] + 2 S-adenosyl-L-methionine = 2-methyladenosine(2503) in 23S rRNA + 5'-deoxyadenosine + L-methionine + 2 oxidized [2Fe-2S]-[ferredoxin] + S-adenosyl-L-homocysteine. It carries out the reaction adenosine(37) in tRNA + 2 reduced [2Fe-2S]-[ferredoxin] + 2 S-adenosyl-L-methionine = 2-methyladenosine(37) in tRNA + 5'-deoxyadenosine + L-methionine + 2 oxidized [2Fe-2S]-[ferredoxin] + S-adenosyl-L-homocysteine. Functionally, specifically methylates position 2 of adenine 2503 in 23S rRNA and position 2 of adenine 37 in tRNAs. m2A2503 modification seems to play a crucial role in the proofreading step occurring at the peptidyl transferase center and thus would serve to optimize ribosomal fidelity. This is Dual-specificity RNA methyltransferase RlmN from Burkholderia vietnamiensis (strain G4 / LMG 22486) (Burkholderia cepacia (strain R1808)).